The chain runs to 72 residues: Large ribosomal subunit protein bL31 (72 aa).

Zn(2+) contacts are provided by cysteine 16, cysteine 18, cysteine 37, and cysteine 40.

The protein belongs to the bacterial ribosomal protein bL31 family. Type A subfamily. Part of the 50S ribosomal subunit. It depends on Zn(2+) as a cofactor.

Functionally, binds the 23S rRNA. The sequence is that of Large ribosomal subunit protein bL31 from Buchnera aphidicola subsp. Acyrthosiphon pisum (strain APS) (Acyrthosiphon pisum symbiotic bacterium).